Here is a 389-residue protein sequence, read N- to C-terminus: snRNA-activating protein complex subunit 1 (389 aa).

The segment covering 1 to 15 has biased composition (low complexity); sequence MGTPAGAGTRPTGAG. Disordered stretches follow at residues 1–22, 245–276, and 290–389; these read MGTP…GVGI, WHKE…ERCE, and SAVV…KRKC. An SNAPC3-binding region spans residues 20 to 187; the sequence is VGIPPGLQTD…QKFKDPNDRV (168 aa). An SNAPC4-binding region spans residues 183 to 287; the sequence is PNDRVMKLIT…AVSLAKIKAK (105 aa). Residues 245–262 show a composition bias toward basic and acidic residues; that stretch reads WHKERKNPSLKPKLKDGE. Phosphoserine is present on residues S308 and S309.

As to quaternary structure, part of the SNAPc complex composed of 5 subunits: SNAPC1, SNAPC2, SNAPC3, SNAPC4 and SNAPC5. SNAPC1 interacts with SNAPC3, SNAPC4 and TBP.

Its subcellular location is the nucleus. Its function is as follows. Part of the SNAPc complex required for the transcription of both RNA polymerase II and III small-nuclear RNA genes. Binds to the proximal sequence element (PSE), a non-TATA-box basal promoter element common to these 2 types of genes. Recruits TBP and BRF2 to the U6 snRNA TATA box. The sequence is that of snRNA-activating protein complex subunit 1 (Snapc1) from Mus musculus (Mouse).